The chain runs to 914 residues: Dynamin-2A (914 aa).

At Met-1 the chain carries N-acetylmethionine. The Dynamin-type G domain maps to 35–303 (PATFLNVVAL…IRSRMKLRLP (269 aa)). The G1 motif stretch occupies residues 45 to 52 (GNVGAGKS). GTP is bound at residue 45–52 (GNVGAGKS). Positions 71 to 73 (ATR) are G2 motif. The G3 motif stretch occupies residues 143 to 146 (DLPG). Residues 143-147 (DLPGL) and 204-207 (GKID) each bind GTP. Positions 204–207 (GKID) are G4 motif. The G5 motif stretch occupies residues 238 to 241 (AVIG). The span at 507 to 522 (RREEELKGRSSKKGQD) shows a compositional bias: basic and acidic residues. Disordered regions lie at residues 507 to 570 (RREE…TAGP) and 629 to 648 (PEDE…NGPD). Over residues 523–535 (AEQSLLSRATSPQ) the composition is skewed to polar residues. 2 stretches are compositionally biased toward basic and acidic residues: residues 547-560 (SMKD…KETP) and 634-645 (EKSKSSKDKKAN). The 125-residue stretch at 572-696 (GEITAGYLMK…WINKLQKVIQ (125 aa)) folds into the PH domain. Residues 730–823 (LRWMSQEVRG…QLSIHDNRAA (94 aa)) enclose the GED domain. Positions 781–805 (NERIESLIQEDQNVKRRRERYQKQS) form a coiled coil. Positions 821-914 (RAAAASSYSD…PPPTGSAYRY (94 aa)) are disordered. Composition is skewed to polar residues over residues 826 to 839 (SSYS…SSPR) and 852 to 866 (AFNS…SLSK).

This sequence belongs to the TRAFAC class dynamin-like GTPase superfamily. Dynamin/Fzo/YdjA family. In terms of assembly, binds PtdIns3P. Interacts with SH3P3 (via SH3 domain) and (via C-terminus) with GAMMA-ADR. May homooligomerize or heterooligomerize.

The protein resides in the cytoplasm. It is found in the cytosol. The protein localises to the golgi apparatus membrane. Its subcellular location is the cytoskeleton. It localises to the phragmoplast. The protein resides in the cytoplasmic vesicle. It is found in the clathrin-coated vesicle. The enzyme catalyses GTP + H2O = GDP + phosphate + H(+). With respect to regulation, increased GTPase activity in the presence of phosphatidic acid. In terms of biological role, microtubule-associated force-producing protein involved in clathrin-mediated vesicle trafficking from the trans-Golgi network to the central vacuole. Able to bind and hydrolyze GTP. Binds specifically to phosphatidylinositol 3-phosphate (PtdIns3P). In Arabidopsis thaliana (Mouse-ear cress), this protein is Dynamin-2A (DRP2A).